Reading from the N-terminus, the 258-residue chain is Axonemal dynein light intermediate polypeptide 1 (258 aa).

2 disordered regions span residues 1–60 (MIPP…CVPD) and 207–231 (VNEQ…EEKK). The span at 34–44 (SPQQPGPSGSA) shows a compositional bias: low complexity. Positions 176–255 (MRKALQAEQG…LKAQLEGIIA (80 aa)) form a coiled coil.

This sequence belongs to the inner dynein arm light chain family. In terms of assembly, interacts with CFAP45. Interacts with DYNC1H1. In terms of tissue distribution, expressed in many tissues. A smaller 0.9 kb and a larger 2.5 kb transcripts were detected at the highest level in the testis, at medium levels in the prostate, heart, liver, lung and pancreas, at low levels in the ovary, skeletal muscle and small intestine. Not detected in spleen, colon epithelium, thymus or peripheral blood leukocytes. The 0.9 kb transcript is expressed at a 20-fold higher level than the 2.5 kb transcript in the testis. Expressed in spermatozoa and airway epithelial cells (at protein level).

The protein localises to the cell projection. Its subcellular location is the cilium. It is found in the flagellum. The protein resides in the dynein axonemal particle. It localises to the cytoplasm. In terms of biological role, involved in sperm flagellum assembly. The sequence is that of Axonemal dynein light intermediate polypeptide 1 from Homo sapiens (Human).